Reading from the N-terminus, the 827-residue chain is Probable inorganic carbon transporter subunit DabA2 (827 aa).

Zn(2+) contacts are provided by C351, D353, H524, and C539.

The protein belongs to the inorganic carbon transporter (TC 9.A.2) DabA family. Forms a complex with DabB2, possibly a heterodimer. The cofactor is Zn(2+).

The protein resides in the cell inner membrane. Its activity is regulated as follows. Uptake of inorganic carbon by cells in the presence of thiosulphate is fully inhibited by the uncouplers carbonyl cyanide m-chlorophenyl hydrazone (CCCP), carbonyl cyanide p-trifluoromethoxyphenyl hydrazone (FCCP), S13 or SF6847. Not inhibited by the ATPase inhibitor N,N-dicyclohexylcarbodiimide (DCCD). Inorganic carbon uptake is inhibited by the ionophore CCCP, suggesting uptake is coupled to a cation gradient. Functionally, part of an energy-coupled inorganic carbon pump; its substrate may be carbon dioxide. Expression of both dabA2 and dabB2 (DAB2) restores growth in ambient air to E.coli deleted of its carbonic anhydrase genes (called CAfree, deletion of 'can' and 'cynT'); neither dabA2 or dabB2 alone is sufficient. Rescue is pH-independent, suggesting it transports CO(2) and not carbonate ions. Together the genes allow greater than normal uptake of inorganic carbon by E.coli. Uptake of carbon dioxide rather than bicarbonate has been suggested based on kinetic calculations. This Halothiobacillus neapolitanus (strain ATCC 23641 / c2) (Thiobacillus neapolitanus) protein is Probable inorganic carbon transporter subunit DabA2.